We begin with the raw amino-acid sequence, 472 residues long: Phosphoenolpyruvate carboxykinase (ATP), glycosomal (472 aa).

221-228 (GLSGTGKT) serves as a coordination point for ATP.

The protein belongs to the phosphoenolpyruvate carboxykinase (ATP) family. As to quaternary structure, homodimer.

It is found in the glycosome. The catalysed reaction is oxaloacetate + ATP = phosphoenolpyruvate + ADP + CO2. Its pathway is carbohydrate biosynthesis; gluconeogenesis. Its function is as follows. P60 has the capability to bind to microtubules and membrane vesicles in vitro. This Trypanosoma brucei brucei protein is Phosphoenolpyruvate carboxykinase (ATP), glycosomal.